The sequence spans 854 residues: DNA mismatch repair protein MutS (854 aa).

614–621 (GPNMGGKS) provides a ligand contact to ATP.

This sequence belongs to the DNA mismatch repair MutS family.

Functionally, this protein is involved in the repair of mismatches in DNA. It is possible that it carries out the mismatch recognition step. This protein has a weak ATPase activity. This Yersinia pestis bv. Antiqua (strain Antiqua) protein is DNA mismatch repair protein MutS.